The following is a 301-amino-acid chain: Cell division protein kinase 2 homolog CRK1 (301 aa).

In terms of domain architecture, Protein kinase spans 5 to 297; that stretch reads YERQEKIGEG…AADALNHPYF (293 aa). ATP is bound by residues 11–19 and lysine 34; that span reads IGEGTYGVV. Aspartate 127 serves as the catalytic Proton acceptor. Threonine 160 carries the post-translational modification Phosphothreonine; by CAK.

This sequence belongs to the protein kinase superfamily. CMGC Ser/Thr protein kinase family. CDC2/CDKX subfamily. Forms a stable but non-covalent complex with a regulatory subunit and with a cyclin.

The enzyme catalyses [DNA-directed RNA polymerase] + ATP = phospho-[DNA-directed RNA polymerase] + ADP + H(+). Its activity is regulated as follows. Phosphorylation at Thr-15 or Tyr-16 inactivates the enzyme, while phosphorylation at Thr-160 activates it. Its function is as follows. May be involved in some stage-specific role in the promastigote cell cycle. In Leishmania mexicana, this protein is Cell division protein kinase 2 homolog CRK1 (CRK1).